Consider the following 528-residue polypeptide: D-3-phosphoglycerate dehydrogenase (528 aa).

Residues 151-152, Asp171, 230-232, and Asp256 each bind NAD(+); these read RI and AAR. The active site involves Arg232. The active site involves Glu261. The active-site Proton donor is the His279. Residue 279 to 282 coordinates NAD(+); that stretch reads HLGA. The region spanning 455–528 is the ACT domain; it reads NLVIRYVDQP…ANKLEVVNLS (74 aa).

This sequence belongs to the D-isomer specific 2-hydroxyacid dehydrogenase family.

The enzyme catalyses (2R)-3-phosphoglycerate + NAD(+) = 3-phosphooxypyruvate + NADH + H(+). The catalysed reaction is (R)-2-hydroxyglutarate + NAD(+) = 2-oxoglutarate + NADH + H(+). Its pathway is amino-acid biosynthesis; L-serine biosynthesis; L-serine from 3-phospho-D-glycerate: step 1/3. Catalyzes the reversible oxidation of 3-phospho-D-glycerate to 3-phosphonooxypyruvate, the first step of the phosphorylated L-serine biosynthesis pathway. Also catalyzes the reversible oxidation of 2-hydroxyglutarate to 2-oxoglutarate. The protein is D-3-phosphoglycerate dehydrogenase (serA) of Mycobacterium leprae (strain TN).